A 272-amino-acid chain; its full sequence is 3-methyl-2-oxobutanoate hydroxymethyltransferase (272 aa).

Mg(2+)-binding residues include Asp-43 and Asp-82. 3-methyl-2-oxobutanoate is bound by residues 43–44 (DS), Asp-82, and Lys-112. Glu-114 is a binding site for Mg(2+). Glu-179 functions as the Proton acceptor in the catalytic mechanism.

The protein belongs to the PanB family. As to quaternary structure, homodecamer; pentamer of dimers. Requires Mg(2+) as cofactor.

The protein resides in the cytoplasm. It catalyses the reaction 3-methyl-2-oxobutanoate + (6R)-5,10-methylene-5,6,7,8-tetrahydrofolate + H2O = 2-dehydropantoate + (6S)-5,6,7,8-tetrahydrofolate. It functions in the pathway cofactor biosynthesis; (R)-pantothenate biosynthesis; (R)-pantoate from 3-methyl-2-oxobutanoate: step 1/2. Its function is as follows. Catalyzes the reversible reaction in which hydroxymethyl group from 5,10-methylenetetrahydrofolate is transferred onto alpha-ketoisovalerate to form ketopantoate. The polypeptide is 3-methyl-2-oxobutanoate hydroxymethyltransferase (Staphylococcus aureus (strain bovine RF122 / ET3-1)).